Here is a 475-residue protein sequence, read N- to C-terminus: Ankyrin repeat, SAM and basic leucine zipper domain-containing protein 1 (475 aa).

Phosphoserine is present on residues Ser17, Ser18, and Ser20. ANK repeat units follow at residues 45–74 (EKNE…SVES), 78–107 (YGWT…NASF), 110–144 (DKQT…DPNV), 148–177 (RLMT…EVNS), 181–210 (NGYT…NKML), and 214–243 (DGKT…PLEG). One can recognise an SAM domain in the interval 272 to 334 (SYTAFGDLEI…KILAALKELE (63 aa)).

As to quaternary structure, interacts with DDX4, PIWIL1, RANBP9 and TDRD1.

It localises to the cytoplasm. Plays a central role during spermatogenesis by repressing transposable elements and preventing their mobilization, which is essential for the germline integrity. Acts via the piRNA metabolic process, which mediates the repression of transposable elements during meiosis by forming complexes composed of piRNAs and Piwi proteins and governs the methylation and subsequent repression of transposons. Its association with pi-bodies suggests a participation in the primary piRNAs metabolic process. Required prior to the pachytene stage to facilitate the production of multiple types of piRNAs, including those associated with repeats involved in the regulation of retrotransposons. May act by mediating protein-protein interactions during germ cell maturation. This Mustela putorius furo (European domestic ferret) protein is Ankyrin repeat, SAM and basic leucine zipper domain-containing protein 1 (ASZ1).